The following is a 211-amino-acid chain: Ferric nitrobindin-like protein (211 aa).

The GXWXGXG motif lies at 21-27; the sequence is GRWRGPG. Residues 104–130 form a disordered region; sequence GVVQEGSDTRTEPGGAEPDPAGRRAPS.

This sequence belongs to the nitrobindin family.

The chain is Ferric nitrobindin-like protein from Beutenbergia cavernae (strain ATCC BAA-8 / DSM 12333 / CCUG 43141 / JCM 11478 / NBRC 16432 / NCIMB 13614 / HKI 0122).